The following is a 444-amino-acid chain: Probable D-serine dehydratase (444 aa).

Lys118 is subject to N6-(pyridoxal phosphate)lysine.

It belongs to the serine/threonine dehydratase family. DsdA subfamily. The cofactor is pyridoxal 5'-phosphate.

The enzyme catalyses D-serine = pyruvate + NH4(+). In Acinetobacter baumannii (strain ATCC 17978 / DSM 105126 / CIP 53.77 / LMG 1025 / NCDC KC755 / 5377), this protein is Probable D-serine dehydratase.